Reading from the N-terminus, the 160-residue chain is Type IV major fimbrial protein FimA (160 aa).

Residues Met1 to Gly7 constitute a propeptide, leader sequence. The residue at position 8 (Phe8) is an N-methylphenylalanine. Residues Phe8–Ile28 form a helical membrane-spanning segment. Cys63 and Cys105 form a disulfide bridge.

Belongs to the N-Me-Phe pilin family. As to quaternary structure, the pili are polar flexible filaments of about 5.4 nanometers diameter and 2.5 micrometers average length; they consist of only a single polypeptide chain arranged in a helical configuration of five subunits per turn in the assembled pilus.

It localises to the fimbrium. Its subcellular location is the membrane. In terms of biological role, major component of the type IV fimbriae that plays an essential role in twitching motility, natural transformation, and protease secretion. This is Type IV major fimbrial protein FimA (fimA) from Dichelobacter nodosus (Bacteroides nodosus).